A 160-amino-acid polypeptide reads, in one-letter code: Cytochrome c-type biogenesis protein CcmE (160 aa).

The Cytoplasmic portion of the chain corresponds to 1 to 7 (MTRKQRR). Residues 8–28 (LFMIFGALGTLGVAVGLILFA) form a helical; Signal-anchor for type II membrane protein membrane-spanning segment. At 29–160 (LSDNIVFFYG…TQGAAAPLIR (132 aa)) the chain is on the periplasmic side. Heme-binding residues include H122 and Y126. Positions 140–160 (VWQEDGQAKPATQGAAAPLIR) are disordered.

The protein belongs to the CcmE/CycJ family.

It localises to the cell inner membrane. Functionally, heme chaperone required for the biogenesis of c-type cytochromes. Transiently binds heme delivered by CcmC and transfers the heme to apo-cytochromes in a process facilitated by CcmF and CcmH. This Beijerinckia indica subsp. indica (strain ATCC 9039 / DSM 1715 / NCIMB 8712) protein is Cytochrome c-type biogenesis protein CcmE.